Here is a 713-residue protein sequence, read N- to C-terminus: MMVSYKLLSLITLLFVAQCTTGLLKQDDYVVRPDLLPGISSIKDKALIPKMYAGHIPLNLQKTTDENENTDESDSNSNTNYFFWKFQHQSVESPNLIFWLNGGPGCSSMDGALVETGPFRVDKNGKLYPNEGSWHSRGDLVYIDQPIGTGLSTSAAIPNLLDDLKEVSDNFILFLENYFTIFPNDLDKDIIIAGESYAGQYIPFFAKAIKEYNQKISDNKKKINLRMLLIGNGWIDPITQSLSYLPFAIEKNLVGKDTPDFETLLKAHEKCQNKINSISEDDNSFSHEECESIINMLVSVTKDNSPNVKSNEVCINIYDFNLRDSFPACGANWPIDVSHVAKFFSTPGVIEALNLNAEEVPRWKECNYDVLNHLTNPVSKPSVRLLPELLESGIEIILFNGENDLVCNNKGITDMISKLTWNGATGFSDKVQKYEWLFRDLTKDTEEPAGTVTFDRNLTFISVYNASHMVAYDKSIVARGILDIYLDNVMLVEKETDSPDVLISTNEPTFSDIEEEELDGEKEDEKDGVTEGDGEKSDTDEGKDTDKGKDEKNDDDDDDDDDSDDDSDDDDDDDDDDDDDDDDDDDSDDDDDDDDDSDDNEKDDKSESETKTHPKAKIALLLLLFISVFGITGSQALRQRNFQFRRAPLTSNSFSSSSSPNDPSNWDSNDDFDFDIENDPLPSTNNKHKAAKKKKDYVSIPSDIDESFELAEI.

Positions 1-22 are cleaved as a signal peptide; the sequence is MMVSYKLLSLITLLFVAQCTTG. Residues 23–616 lie on the Lumenal side of the membrane; the sequence is LLKQDDYVVR…ESETKTHPKA (594 aa). Residues serine 196 and aspartate 404 contribute to the active site. Residues asparagine 457 and asparagine 465 are each glycosylated (N-linked (GlcNAc...) asparagine). Residue histidine 468 is part of the active site. The tract at residues 500–612 is disordered; that stretch reads DVLISTNEPT…DDKSESETKT (113 aa). Positions 512-522 are enriched in acidic residues; sequence DIEEEELDGEK. Basic and acidic residues predominate over residues 523–552; that stretch reads EDEKDGVTEGDGEKSDTDEGKDTDKGKDEK. Residues 553 to 601 show a composition bias toward acidic residues; the sequence is NDDDDDDDDDSDDDSDDDDDDDDDDDDDDDDDDDSDDDDDDDDDSDDNE. Over residues 602–612 the composition is skewed to basic and acidic residues; it reads KDDKSESETKT. Residues 617–637 form a helical membrane-spanning segment; it reads KIALLLLLFISVFGITGSQAL. At 638–713 the chain is on the cytoplasmic side; it reads RQRNFQFRRA…IDESFELAEI (76 aa). The segment at 650 to 696 is disordered; sequence TSNSFSSSSSPNDPSNWDSNDDFDFDIENDPLPSTNNKHKAAKKKKD. Residues 651 to 667 show a composition bias toward low complexity; the sequence is SNSFSSSSSPNDPSNWD. Positions 668 to 678 are enriched in acidic residues; the sequence is SNDDFDFDIEN. Over residues 686-695 the composition is skewed to basic residues; sequence NKHKAAKKKK.

This sequence belongs to the peptidase S10 family.

The protein resides in the golgi apparatus. It localises to the trans-Golgi network membrane. The enzyme catalyses Preferential release of a C-terminal arginine or lysine residue.. Its function is as follows. Protease with a carboxypeptidase B-like function involved in the C-terminal processing of the lysine and arginine residues from protein precursors. Promotes cell fusion and is involved in the programmed cell death. The polypeptide is Pheromone-processing carboxypeptidase KEX1 (KEX1) (Vanderwaltozyma polyspora (strain ATCC 22028 / DSM 70294 / BCRC 21397 / CBS 2163 / NBRC 10782 / NRRL Y-8283 / UCD 57-17) (Kluyveromyces polysporus)).